The following is a 298-amino-acid chain: Protein ABIL1 (298 aa).

The protein belongs to the ABI family. Binds SCAR2. As to expression, expressed in seedlings, roots, hypocotyls, cotyledons, leaves, stems, and flowers.

It is found in the cytoplasm. The protein localises to the cytoskeleton. Functionally, involved in regulation of actin and microtubule organization. Part of a WAVE complex that activates the Arp2/3 complex. This is Protein ABIL1 (ABIL1) from Arabidopsis thaliana (Mouse-ear cress).